Reading from the N-terminus, the 678-residue chain is Pescadillo homolog (678 aa).

The span at 283–303 (EEEEPEEVDSEAGDEDDDDLP) shows a compositional bias: acidic residues. The disordered stretch occupies residues 283 to 316 (EEEEPEEVDSEAGDEDDDDLPVLDSGTRRRRAAA). Positions 361–451 (VCGSLFRGRV…VLMPTDLYAP (91 aa)) constitute a BRCT domain. The stretch at 552–587 (MTRKARKMYNNMKQKEAAKQERVQQLESKKAKLAAT) forms a coiled coil. Residues 563 to 678 (MKQKEAAKQE…DAAPAKRQRR (116 aa)) form a disordered region. Positions 564–581 (KQKEAAKQERVQQLESKK) are enriched in basic and acidic residues. Composition is skewed to low complexity over residues 597-618 (KPAAAGKAAAAKAAAPAKVAAS) and 630-661 (APAPAKGKGTPAAKGKEAPAPAKGKGAAAAKE). Over residues 662-672 (APAKGGKDAAP) the composition is skewed to basic and acidic residues.

This sequence belongs to the pescadillo family.

It localises to the nucleus. It is found in the nucleolus. The protein resides in the nucleoplasm. Its function is as follows. Required for maturation of ribosomal RNAs and formation of the large ribosomal subunit. The sequence is that of Pescadillo homolog from Chlamydomonas reinhardtii (Chlamydomonas smithii).